We begin with the raw amino-acid sequence, 205 residues long: Phosphoserine phosphatase ThrH (205 aa).

The active-site Nucleophile is the Asp-7. Asp-7 and Glu-9 together coordinate Mg(2+). The active-site Proton donor is Glu-9. Residues Glu-15, Arg-46, 90–91, and Lys-133 each bind substrate; that span reads SD. Residue Asp-152 coordinates Mg(2+). Asn-155 is a binding site for substrate.

The protein belongs to the thrH family. Mg(2+) is required as a cofactor.

It carries out the reaction O-phospho-L-serine + H2O = L-serine + phosphate. It catalyses the reaction O-phospho-D-serine + H2O = D-serine + phosphate. Its pathway is amino-acid biosynthesis; L-serine biosynthesis; L-serine from 3-phospho-D-glycerate: step 3/3. In terms of biological role, phosphoserine phosphatase that mediates dephosphorylation of phosphoserine in the serine biosynthesis pathway. Also able to dephosphorylate other substrates such as phospho-L(or D)-threonine, with lower activity. Shows phosphoserine:homoserine phosphotransferase activity by transferring the phosphoryl group to homoserine using phosphoserine as the phosphoryl group donor. The polypeptide is Phosphoserine phosphatase ThrH (thrH) (Pseudomonas aeruginosa (strain ATCC 15692 / DSM 22644 / CIP 104116 / JCM 14847 / LMG 12228 / 1C / PRS 101 / PAO1)).